The chain runs to 707 residues: Zinc finger CCHC domain-containing protein 8 (707 aa).

Residue Ala-2 is modified to N-acetylalanine. Residues 16 to 44 (FDHPEESIPKPVHTRFKDDDGDEEDENGV) form a disordered region. Over residues 34–43 (DDGDEEDENG) the composition is skewed to acidic residues. Residues 45–80 (GDAELRERLRQCEETIEQLRAENQELKRKLNILTRP) adopt a coiled-coil conformation. A CCHC-type zinc finger spans residues 227–244 (PHCFNCGSEEHQMKDCPM). RBM7 binding stretches follow at residues 286-299 (FKPGVISEELQDAL) and 309-324 (FIYRMRQLGYPPGWLK). Phosphothreonine is present on Thr-342. Disordered stretches follow at residues 409 to 518 (APGV…LTLE), 531 to 607 (LEQA…TSLC), and 641 to 660 (QKLFPADTSPSTATKIHSPI). A Glycyl lysine isopeptide (Lys-Gly) (interchain with G-Cter in SUMO2) cross-link involves residue Lys-413. Low complexity predominate over residues 456 to 465 (SQSSESFQFQ). Residues 466–496 (PPLPPDTPPLPRGTPPPVFTPPLPKGTPPLT) show a composition bias toward pro residues. Phosphothreonine occurs at positions 472, 479, and 485. Residue Thr-492 is modified to Phosphothreonine; by GSK3. Residues 516 to 539 (TLEELEEQQRRIWAALEQAESVNS) adopt a coiled-coil conformation. Residues 549 to 559 (LTGNSVASSPC) show a composition bias toward polar residues. Thr-577 is modified (phosphothreonine). Ser-598 carries the phosphoserine modification. A compositionally biased stretch (polar residues) spans 598–607 (SPDSEVTSLC). Thr-648 carries the post-translational modification Phosphothreonine. Phosphoserine is present on residues Ser-649, Ser-658, and Ser-695. The segment at 659 to 707 (PIPDMSKFATGITPFEFENMAESTGMYLRIRSLLKNSPRNQQKNKKASE) is MTREX binding.

Belongs to the ZCCHC8 family. As to quaternary structure, component of a nuclear TRAMP-like complex, an ATP-dependent exosome regulatory complex consisting of a helicase (MTREX), an oligadenylate polymerase (TENT4B or TENT4A), and a substrate specific RNA-binding factor (ZCCHC7 or ZCCHC8). Several TRAMP-like complexes exist with specific compositions and are associated with nuclear, or nucleolar RNA exosomes. Identified in the spliceosome C complex. Component of the nuclear exosome targeting (NEXT) complex composed of MTREX, ZCCHC8, and RBM7 that directs a subset of non-coding short-lived RNAs for exosomal degradation. Interacts with proteins involved in RNA processing and degradation such as MTREX and RBM7; interaction with MTREX enhances MTREX RNA helicase activity and bridges between RBM7 and MTREX. Interacts with TERC, the telomerase RNA component. In terms of processing, phosphorylation at Thr-492 by GSK3 is triggered in cells entering mitosis; this phosphorylation is greatly enhanced by nocodazole treatment, but reduced by lithium.

The protein localises to the nucleus. The protein resides in the nucleoplasm. Its function is as follows. Scaffolding subunit of the trimeric nuclear exosome targeting (NEXT) complex that is involved in the surveillance and turnover of aberrant transcripts and non-coding RNAs. NEXT functions as an RNA exosome cofactor that directs a subset of non-coding short-lived RNAs for exosomal degradation. May be involved in pre-mRNA splicing. It is required for 3'-end maturation of telomerase RNA component (TERC), TERC 3'-end targeting to the nuclear RNA exosome, and for telomerase function. This chain is Zinc finger CCHC domain-containing protein 8 (ZCCHC8), found in Homo sapiens (Human).